A 146-amino-acid chain; its full sequence is MTLKLHNLRPAPGAKTAKTRVGRGEGSKGKTAGRGTKGTKARYQVPAAFEGGQMPIHMRLPKLKGFKNPFKVEFQVVNLDRINQLFPEGGAVGVEDLVAKGAVRDGHPVKVLGQGEISVAVQVSANAFSATASEKIEAAGGTTTLV.

The tract at residues 1 to 39 is disordered; sequence MTLKLHNLRPAPGAKTAKTRVGRGEGSKGKTAGRGTKGT.

Belongs to the universal ribosomal protein uL15 family. As to quaternary structure, part of the 50S ribosomal subunit.

Binds to the 23S rRNA. This chain is Large ribosomal subunit protein uL15, found in Nocardioides sp. (strain ATCC BAA-499 / JS614).